A 203-amino-acid chain; its full sequence is Glycerol-3-phosphate acyltransferase (203 aa).

6 helical membrane passes run 5–25, 58–78, 87–107, 118–138, 150–170, and 176–196; these read IIYL…LAQI, TLAV…ILMA, ILWT…YLKF, GVLA…WFII, LGAM…IPVI, and IFII…RLIG.

It belongs to the PlsY family. Probably interacts with PlsX.

The protein resides in the cell inner membrane. The enzyme catalyses an acyl phosphate + sn-glycerol 3-phosphate = a 1-acyl-sn-glycero-3-phosphate + phosphate. It participates in lipid metabolism; phospholipid metabolism. Catalyzes the transfer of an acyl group from acyl-phosphate (acyl-PO(4)) to glycerol-3-phosphate (G3P) to form lysophosphatidic acid (LPA). This enzyme utilizes acyl-phosphate as fatty acyl donor, but not acyl-CoA or acyl-ACP. The sequence is that of Glycerol-3-phosphate acyltransferase from Campylobacter lari (strain RM2100 / D67 / ATCC BAA-1060).